A 1295-amino-acid polypeptide reads, in one-letter code: Phosphoribosylformylglycinamidine synthase (1295 aa).

Residues 305 to 327 are disordered; the sequence is WPGAATGSGGEIRDEGATGRGAK. Residues 307 to 318, 386 to 388, and Ala678 contribute to the ATP site; these read GAATGSGGEIRD and TGY. Mg(2+)-binding residues include Asp679, Glu718, Asn722, and Asp884. Ser886 provides a ligand contact to ATP. The 254-residue stretch at 1042-1295 folds into the Glutamine amidotransferase type-1 domain; it reads VAVLREQGVN…IFRNARKQLG (254 aa). Cys1135 (nucleophile) is an active-site residue. Catalysis depends on residues His1260 and Glu1262.

This sequence in the N-terminal section; belongs to the FGAMS family. As to quaternary structure, monomer.

The protein resides in the cytoplasm. The catalysed reaction is N(2)-formyl-N(1)-(5-phospho-beta-D-ribosyl)glycinamide + L-glutamine + ATP + H2O = 2-formamido-N(1)-(5-O-phospho-beta-D-ribosyl)acetamidine + L-glutamate + ADP + phosphate + H(+). The protein operates within purine metabolism; IMP biosynthesis via de novo pathway; 5-amino-1-(5-phospho-D-ribosyl)imidazole from N(2)-formyl-N(1)-(5-phospho-D-ribosyl)glycinamide: step 1/2. Phosphoribosylformylglycinamidine synthase involved in the purines biosynthetic pathway. Catalyzes the ATP-dependent conversion of formylglycinamide ribonucleotide (FGAR) and glutamine to yield formylglycinamidine ribonucleotide (FGAM) and glutamate. This Salmonella paratyphi A (strain ATCC 9150 / SARB42) protein is Phosphoribosylformylglycinamidine synthase.